The following is a 245-amino-acid chain: tRNA pseudouridine synthase A (245 aa).

Asp-52 acts as the Nucleophile in catalysis. Tyr-111 contacts substrate.

It belongs to the tRNA pseudouridine synthase TruA family. In terms of assembly, homodimer.

The catalysed reaction is uridine(38/39/40) in tRNA = pseudouridine(38/39/40) in tRNA. Functionally, formation of pseudouridine at positions 38, 39 and 40 in the anticodon stem and loop of transfer RNAs. The polypeptide is tRNA pseudouridine synthase A (Wolbachia sp. subsp. Drosophila simulans (strain wRi)).